Reading from the N-terminus, the 304-residue chain is 33 kDa chaperonin (304 aa).

Intrachain disulfides connect cysteine 236-cysteine 238 and cysteine 269-cysteine 272.

The protein belongs to the HSP33 family. Post-translationally, under oxidizing conditions two disulfide bonds are formed involving the reactive cysteines. Under reducing conditions zinc is bound to the reactive cysteines and the protein is inactive.

It is found in the cytoplasm. In terms of biological role, redox regulated molecular chaperone. Protects both thermally unfolding and oxidatively damaged proteins from irreversible aggregation. Plays an important role in the bacterial defense system toward oxidative stress. The protein is 33 kDa chaperonin of Pelobacter propionicus (strain DSM 2379 / NBRC 103807 / OttBd1).